The sequence spans 165 residues: Nucleotide-binding protein CFF8240_1664 (165 aa).

The protein belongs to the YajQ family.

Nucleotide-binding protein. The protein is Nucleotide-binding protein CFF8240_1664 of Campylobacter fetus subsp. fetus (strain 82-40).